A 350-amino-acid chain; its full sequence is Biotin synthase (350 aa).

A Radical SAM core domain is found at 54–278 (REIQLSTLLS…TMPQSYVRLS (225 aa)). Cys69, Cys73, and Cys76 together coordinate [4Fe-4S] cluster. Positions 113, 144, 204, and 276 each coordinate [2Fe-2S] cluster.

This sequence belongs to the radical SAM superfamily. Biotin synthase family. In terms of assembly, homodimer. The cofactor is [4Fe-4S] cluster. Requires [2Fe-2S] cluster as cofactor.

The enzyme catalyses (4R,5S)-dethiobiotin + (sulfur carrier)-SH + 2 reduced [2Fe-2S]-[ferredoxin] + 2 S-adenosyl-L-methionine = (sulfur carrier)-H + biotin + 2 5'-deoxyadenosine + 2 L-methionine + 2 oxidized [2Fe-2S]-[ferredoxin]. The protein operates within cofactor biosynthesis; biotin biosynthesis; biotin from 7,8-diaminononanoate: step 2/2. In terms of biological role, catalyzes the conversion of dethiobiotin (DTB) to biotin by the insertion of a sulfur atom into dethiobiotin via a radical-based mechanism. The sequence is that of Biotin synthase from Neisseria meningitidis serogroup B (strain ATCC BAA-335 / MC58).